The chain runs to 74 residues: Small ribosomal subunit protein bS18 (74 aa).

Belongs to the bacterial ribosomal protein bS18 family. Part of the 30S ribosomal subunit. Forms a tight heterodimer with protein bS6.

In terms of biological role, binds as a heterodimer with protein bS6 to the central domain of the 16S rRNA, where it helps stabilize the platform of the 30S subunit. This chain is Small ribosomal subunit protein bS18, found in Coprothermobacter proteolyticus (strain ATCC 35245 / DSM 5265 / OCM 4 / BT).